A 333-amino-acid polypeptide reads, in one-letter code: Glycerol-3-phosphate dehydrogenase [NAD(P)+] (333 aa).

5 residues coordinate NADPH: Ser-10, Trp-11, His-31, Arg-32, and Lys-105. The sn-glycerol 3-phosphate site is built by Lys-105, Gly-136, and Ser-138. Ala-140 contributes to the NADPH binding site. 5 residues coordinate sn-glycerol 3-phosphate: Lys-191, Asp-244, Ser-254, Arg-255, and Asn-256. The active-site Proton acceptor is Lys-191. Residue Arg-255 coordinates NADPH. NADPH is bound by residues Ile-279 and Glu-281.

The protein belongs to the NAD-dependent glycerol-3-phosphate dehydrogenase family.

The protein resides in the cytoplasm. The catalysed reaction is sn-glycerol 3-phosphate + NAD(+) = dihydroxyacetone phosphate + NADH + H(+). It carries out the reaction sn-glycerol 3-phosphate + NADP(+) = dihydroxyacetone phosphate + NADPH + H(+). It functions in the pathway membrane lipid metabolism; glycerophospholipid metabolism. In terms of biological role, catalyzes the reduction of the glycolytic intermediate dihydroxyacetone phosphate (DHAP) to sn-glycerol 3-phosphate (G3P), the key precursor for phospholipid synthesis. The polypeptide is Glycerol-3-phosphate dehydrogenase [NAD(P)+] (Chlorobium chlorochromatii (strain CaD3)).